Reading from the N-terminus, the 334-residue chain is Protein-methionine-sulfoxide reductase catalytic subunit MsrP (334 aa).

A signal peptide (tat-type signal) is located at residues 1–44; sequence MKKKQFLKESDVTAESVFFMKRRQVLKALGISAAALSLPHAAHA. Mo-molybdopterin is bound by residues N88, 91 to 92, C146, T181, N233, R238, and 249 to 251; these read YE and GIK.

Belongs to the MsrP family. In terms of assembly, heterodimer of a catalytic subunit (MsrP) and a heme-binding subunit (MsrQ). Mo-molybdopterin serves as cofactor. Post-translationally, predicted to be exported by the Tat system. The position of the signal peptide cleavage has not been experimentally proven.

It is found in the periplasm. The catalysed reaction is L-methionyl-[protein] + a quinone + H2O = L-methionyl-(S)-S-oxide-[protein] + a quinol. It carries out the reaction L-methionyl-[protein] + a quinone + H2O = L-methionyl-(R)-S-oxide-[protein] + a quinol. In terms of biological role, part of the MsrPQ system that repairs oxidized periplasmic proteins containing methionine sulfoxide residues (Met-O), using respiratory chain electrons. Thus protects these proteins from oxidative-stress damage caused by reactive species of oxygen and chlorine generated by the host defense mechanisms. MsrPQ is essential for the maintenance of envelope integrity under bleach stress, rescuing a wide series of structurally unrelated periplasmic proteins from methionine oxidation, including the primary periplasmic chaperone SurA and the lipoprotein Pal. The catalytic subunit MsrP is non-stereospecific, being able to reduce both (R-) and (S-) diastereoisomers of methionine sulfoxide. This Escherichia coli O139:H28 (strain E24377A / ETEC) protein is Protein-methionine-sulfoxide reductase catalytic subunit MsrP.